The primary structure comprises 382 residues: Lipid-A-disaccharide synthase (382 aa).

The protein belongs to the LpxB family.

It catalyses the reaction 2-N,3-O-bis[(3R)-3-hydroxytetradecanoyl]-alpha-D-glucosaminyl 1-phosphate + UDP-2-N,3-O-bis[(3R)-3-hydroxytetradecanoyl]-alpha-D-glucosamine = lipid A disaccharide (E. coli) + UDP + H(+). The catalysed reaction is a lipid X + a UDP-2-N,3-O-bis[(3R)-3-hydroxyacyl]-alpha-D-glucosamine = a lipid A disaccharide + UDP + H(+). The protein operates within glycolipid biosynthesis; lipid IV(A) biosynthesis; lipid IV(A) from (3R)-3-hydroxytetradecanoyl-[acyl-carrier-protein] and UDP-N-acetyl-alpha-D-glucosamine: step 5/6. Its function is as follows. Condensation of UDP-2,3-diacylglucosamine and 2,3-diacylglucosamine-1-phosphate to form lipid A disaccharide, a precursor of lipid A, a phosphorylated glycolipid that anchors the lipopolysaccharide to the outer membrane of the cell. This is Lipid-A-disaccharide synthase from Escherichia coli O45:K1 (strain S88 / ExPEC).